The following is a 71-amino-acid chain: Biotinylated protein TB7.3 homolog (71 aa).

Residues 2 to 71 (AEDVRAEIVA…QAGDLIAVIS (70 aa)) enclose the Biotinyl-binding domain. At Lys37 the chain carries N6-biotinyllysine.

This Mycobacterium leprae (strain TN) protein is Biotinylated protein TB7.3 homolog.